The primary structure comprises 458 residues: Ammonium transporter Rh type B (458 aa).

The Cytoplasmic portion of the chain corresponds to 1–13; that stretch reads MAGSPSRAAGRRL. A helical transmembrane segment spans residues 14 to 34; the sequence is QLPLLCLFLQGATAVLFAVFV. The Extracellular segment spans residues 35-61; the sequence is RYNHKTDAALWHRGNYSNADNEFYFRY. Residue asparagine 49 is glycosylated (N-linked (GlcNAc...) asparagine). The helical transmembrane segment at 62–82 threads the bilayer; the sequence is PSFQDVHAMVFVGFGFLMVFL. Residues 83–86 lie on the Cytoplasmic side of the membrane; sequence QRYG. Residues 87–107 traverse the membrane as a helical segment; sequence FSSVGFTFLLAAFALQWSTLV. Residues 108–124 lie on the Extracellular side of the membrane; sequence QGFLHSFHSGHIHVGVE. Residues 125-145 traverse the membrane as a helical segment; it reads SMINADFCAGAVLISFGAVLG. Over 146-149 the chain is Cytoplasmic; the sequence is KTGP. The helical transmembrane segment at 150-170 threads the bilayer; it reads AQLLLMALLEVVLFGINEFVL. Over 171–178 the chain is Extracellular; the sequence is LHLLGVRD. Residues 179–201 traverse the membrane as a helical segment; the sequence is AGGSMTIHTFGAYFGLVLSRVLY. Residues 202–219 are Cytoplasmic-facing; it reads RPQLEKSKHRQGSVYHSD. Residues 220-240 traverse the membrane as a helical segment; sequence LFAMIGTIFLWIFWPSFNSAL. Over 241–251 the chain is Extracellular; that stretch reads TALGAGQHRTA. A helical membrane pass occupies residues 252–272; it reads LNTYYSLAASTLGTFALSALV. Topologically, residues 273-282 are cytoplasmic; that stretch reads GEDGRLDMVH. The helical transmembrane segment at 283–303 threads the bilayer; that stretch reads IQNAALAGGVVVGTSSEMMLT. Residue proline 304 is a topological domain, extracellular. Residues 305-325 traverse the membrane as a helical segment; it reads FGALAAGFLAGTVSTLGYKFF. The Cytoplasmic segment spans residues 326–346; that stretch reads TPILESKFKVQDTCGVHNLHG. Residues 347-367 form a helical membrane-spanning segment; the sequence is MPGVLGALLGVLVAGLATHEA. The Extracellular segment spans residues 368-393; that stretch reads YGDGLESVFPLIAEGQRSATSQAMLQ. The helical transmembrane segment at 394–414 threads the bilayer; it reads LFGLFVTLMFASVGGGLGGLL. Residues 415-458 lie on the Cytoplasmic side of the membrane; sequence LKLPFLDSPPDSQCYEDQVHWQVPGEHEDEAQRPLRVEEADTQA. An interaction with ANK3 region spans residues 416–424; it reads KLPFLDSPP. The Basolateral sorting signal signature appears at 429–432; the sequence is YEDQ. Residues 439–458 are disordered; the sequence is GEHEDEAQRPLRVEEADTQA. A compositionally biased stretch (basic and acidic residues) spans 444-458; the sequence is EAQRPLRVEEADTQA.

The protein belongs to the ammonium transporter (TC 2.A.49) family. Rh subfamily. As to quaternary structure, interacts (via C-terminus) with ANK2 and ANK3; required for targeting to the basolateral membrane. In terms of processing, N-glycosylated.

The protein localises to the cell membrane. Its subcellular location is the basolateral cell membrane. It catalyses the reaction NH4(+)(in) = NH4(+)(out). The catalysed reaction is methylamine(out) = methylamine(in). The enzyme catalyses CO2(out) = CO2(in). In terms of biological role, ammonium transporter involved in the maintenance of acid-base homeostasis. Transports ammonium and its related derivative methylammonium across the basolateral plasma membrane of epithelial cells likely contributing to renal transepithelial ammonia transport and ammonia metabolism. May transport either NH4(+) or NH3 ammonia species predominantly mediating an electrogenic NH4(+) transport. May act as a CO2 channel providing for renal acid secretion. The sequence is that of Ammonium transporter Rh type B (RHBG) from Papio hamadryas (Hamadryas baboon).